The primary structure comprises 269 residues: Energy-coupling factor transporter ATP-binding protein EcfA1 (269 aa).

Residues 8–242 enclose the ABC transporter domain; the sequence is IVFKNVSFQY…AEGLTTIGLD (235 aa). 42–49 provides a ligand contact to ATP; that stretch reads GHNGSGKS.

This sequence belongs to the ABC transporter superfamily. Energy-coupling factor EcfA family. As to quaternary structure, forms a stable energy-coupling factor (ECF) transporter complex composed of 2 membrane-embedded substrate-binding proteins (S component), 2 ATP-binding proteins (A component) and 2 transmembrane proteins (T component).

Its subcellular location is the cell membrane. In terms of biological role, ATP-binding (A) component of a common energy-coupling factor (ECF) ABC-transporter complex. Unlike classic ABC transporters this ECF transporter provides the energy necessary to transport a number of different substrates. In Staphylococcus aureus (strain bovine RF122 / ET3-1), this protein is Energy-coupling factor transporter ATP-binding protein EcfA1.